The primary structure comprises 186 residues: MNTIRNSICLTIITMVLCGFLFPLAITLIGQIFFYQQANGSLITYDNRIVGSKLIGQHWTDTRYFHGRPSAVDYNMNPEKLYKNGVSSGGSNESNGNTELIARVKHHVKFGNSNVTIDAATSSGSGLDPHITVENALKQAPRIADARHISTSRVTDLIQHRMQRGVLTNDYVNVLELNIALDKMKY.

Residues 10–30 form a helical membrane-spanning segment; sequence LTIITMVLCGFLFPLAITLIG.

Belongs to the KdpC family. In terms of assembly, the system is composed of three essential subunits: KdpA, KdpB and KdpC.

Its subcellular location is the cell membrane. Its function is as follows. Part of the high-affinity ATP-driven potassium transport (or Kdp) system, which catalyzes the hydrolysis of ATP coupled with the electrogenic transport of potassium into the cytoplasm. This subunit acts as a catalytic chaperone that increases the ATP-binding affinity of the ATP-hydrolyzing subunit KdpB by the formation of a transient KdpB/KdpC/ATP ternary complex. This chain is Potassium-transporting ATPase KdpC subunit, found in Staphylococcus aureus (strain bovine RF122 / ET3-1).